The chain runs to 107 residues: Phosphoribosyl-ATP pyrophosphatase (107 aa).

It belongs to the PRA-PH family.

It is found in the cytoplasm. The catalysed reaction is 1-(5-phospho-beta-D-ribosyl)-ATP + H2O = 1-(5-phospho-beta-D-ribosyl)-5'-AMP + diphosphate + H(+). Its pathway is amino-acid biosynthesis; L-histidine biosynthesis; L-histidine from 5-phospho-alpha-D-ribose 1-diphosphate: step 2/9. The protein is Phosphoribosyl-ATP pyrophosphatase of Rhizobium johnstonii (strain DSM 114642 / LMG 32736 / 3841) (Rhizobium leguminosarum bv. viciae).